The sequence spans 438 residues: RNA ligase (438 aa).

Y48, R63, and K83 together coordinate ATP. Catalysis depends on K127, which acts as the N6-AMP-lysine intermediate. Positions 198, 311, and 313 each coordinate ATP. D342 contributes to the Mg(2+) binding site.

Requires Mg(2+) as cofactor. The cofactor is Mn(2+).

Involved in countering a host defense mechanism which, following viral infection, activates the host induced anticodon nuclease and shuts off viral translation. Repairs 5'-PO4 and 3'-OH groups in the cleaved host tRNA. The chain is RNA ligase from Rhodothermus phage RM378 (Bacteriophage RM378).